Reading from the N-terminus, the 594-residue chain is MSDSPAGSNPRTPESSGSGGGSSSGGGGGKRPAVPAVVSLLPPADPLRQANRLPIRVLKMLSAHTGHLLHPEYLQPLSSTPVSPIELDAKKSPLALLAQTCSQIGKPDPPPSSKLNSVAAAAANGLGSEKDPSRSAPGAASAAAALKQLGDSPAEDKSSFKPYSKGSGGGDSRKDSGSSSVSSTTSSSSSSPGDKAGFRVPSAACPPFPPHGASVSTSSNSSSPGGSRGGSPHHSDCKNGGGGAGELDKKEQEAKPSPEPAAGSRGSGGDSAHGGPEATASGRKSEPPSALVGAGHVAPVSPYKPGHSVFPLPPSSIGYHGSIVGAYAGYPSQFVPGLDPSKSGLVGGQLSGGLGLPPGKPPSSSPLTGASPPSFLQGLCRDPYCLGGYHSASHLGGSSCSTCSAHDPTGPSLKASGYPLVYPGHPLQPAALSSSAAQAALPGHPLYTYGFMLQNEPLPHSCNWVAASGPCDKRFATSEELLSHLRTHTALPGAEKLLAAYPGASSLGSAAAAAAAAASCHLHLPPPAAPGSPGSLSLRSPHTLGLSRYHPYGKSHLSTAGGLAVPSLPTAGPYYSPYALYGQRLASASALGYQ.

Residues 1 to 14 (MSDSPAGSNPRTPE) show a composition bias toward polar residues. Disordered stretches follow at residues 1–37 (MSDS…VPAV), 100–298 (TCSQ…GHVA), and 345–370 (LVGG…LTGA). Residue serine 2 is modified to N-acetylserine. Over residues 17–30 (GSGGGSSSGGGGGK) the composition is skewed to gly residues. Composition is skewed to low complexity over residues 134–145 (RSAPGAASAAAA), 177–191 (GSSS…SSSS), and 212–225 (GASV…SSPG). The span at 246 to 256 (ELDKKEQEAKP) shows a compositional bias: basic and acidic residues. Serine 257 carries the phosphoserine modification. Over residues 345–356 (LVGGQLSGGLGL) the composition is skewed to gly residues. The segment at 460–488 (HSCNWVAASGPCDKRFATSEELLSHLRTH) adopts a C2H2-type zinc-finger fold. Arginine 584 is modified (omega-N-methylarginine).

It belongs to the Elbow/Noc family. Interacts with DCAF7 and PHB2. Interacts with TLE4; increases transcriptional repression. Expressed in mammary epithelium.

It localises to the nucleus. Its subcellular location is the cytoplasm. Functionally, transcriptional corepressor which does not bind directly to DNA and may regulate transcription through recruitment of histone deacetylases to gene promoters. Regulates cell adhesion, migration and proliferation. May be required for segmental gene expression during hindbrain development. This is Zinc finger protein 703 (Znf703) from Mus musculus (Mouse).